Consider the following 228-residue polypeptide: MQKLKQQVFEANMDLPRYGLVTFTWGNVSAIDRERGLVVIKPSGVAYETMKADDMVVVDMSGKVVEGEYRPSSDTATHLELYRRYPSLGGIVHTHSTHATAWAQAGLAIPALGTTHADYFFGDIPCTRGLSEEEVQGEYELNTGKVIIETLGNAEPLHTPGIVVYQHGPFAWGKDAHDAVHNAVVMEEVAKMAWIARSINPQLNHIDSFLMNKHFMRKHGPNAYYGQK.

Residues 26–27 (GN), 43–44 (SG), and 72–73 (SS) contribute to the substrate site. Aspartate 74, histidine 93, and histidine 95 together coordinate Zn(2+). Aspartate 118 acts as the Proton donor/acceptor in catalysis. Histidine 167 serves as a coordination point for Zn(2+). Tyrosine 225 functions as the Proton donor/acceptor in the catalytic mechanism.

It belongs to the aldolase class II family. AraD/FucA subfamily. Zn(2+) serves as cofactor.

The enzyme catalyses L-ribulose 5-phosphate = D-xylulose 5-phosphate. It participates in cofactor degradation; L-ascorbate degradation; D-xylulose 5-phosphate from L-ascorbate: step 4/4. Its function is as follows. Catalyzes the isomerization of L-ribulose 5-phosphate to D-xylulose 5-phosphate. Is involved in the anaerobic L-ascorbate utilization. This is L-ribulose-5-phosphate 4-epimerase UlaF from Escherichia coli (strain 55989 / EAEC).